A 226-amino-acid chain; its full sequence is Ras-related protein RABA4a (226 aa).

Residue T2 is modified to N-acetylthreonine. G24 to S31 lines the GTP pocket. The Effector region motif lies at S46–F54. GTP-binding positions include D72–Q76, N130–D133, and S160–A161. The interval A189–S226 is disordered. The span at P217–S226 shows a compositional bias: polar residues. S-geranylgeranyl cysteine attachment occurs at residues C223 and C224.

It belongs to the small GTPase superfamily. Rab family. Interacts with TCTP1.

The protein resides in the cell membrane. Intracellular vesicle trafficking and protein transport. This is Ras-related protein RABA4a from Arabidopsis thaliana (Mouse-ear cress).